Reading from the N-terminus, the 170-residue chain is Peptide deformylase (170 aa).

Cys-91 and His-133 together coordinate Fe cation. Glu-134 is a catalytic residue. Fe cation is bound at residue His-137.

It belongs to the polypeptide deformylase family. Fe(2+) serves as cofactor.

The enzyme catalyses N-terminal N-formyl-L-methionyl-[peptide] + H2O = N-terminal L-methionyl-[peptide] + formate. In terms of biological role, removes the formyl group from the N-terminal Met of newly synthesized proteins. Requires at least a dipeptide for an efficient rate of reaction. N-terminal L-methionine is a prerequisite for activity but the enzyme has broad specificity at other positions. The protein is Peptide deformylase of Histophilus somni (strain 2336) (Haemophilus somnus).